Here is a 1573-residue protein sequence, read N- to C-terminus: Pentafunctional AROM polypeptide (1573 aa).

Residues 1 to 384 form a 3-dehydroquinate synthase region; the sequence is MSNESNIITV…YEKHATVVSD (384 aa). NAD(+) contacts are provided by residues 46–48, 83–86, 114–116, and aspartate 119; these read DSN, ESSK, and GGV. Residue arginine 130 participates in 7-phospho-2-dehydro-3-deoxy-D-arabino-heptonate binding. 139-140 contributes to the NAD(+) binding site; it reads TT. 7-phospho-2-dehydro-3-deoxy-D-arabino-heptonate contacts are provided by aspartate 146 and lysine 152. Lysine 161 provides a ligand contact to NAD(+). 7-phospho-2-dehydro-3-deoxy-D-arabino-heptonate is bound at residue asparagine 162. Residues 179-182 and asparagine 190 contribute to the NAD(+) site; that span reads FLHT. Glutamate 194 serves as a coordination point for Zn(2+). Residues 194–197 and lysine 250 contribute to the 7-phospho-2-dehydro-3-deoxy-D-arabino-heptonate site; that span reads EIIK. The active-site Proton acceptor; for 3-dehydroquinate synthase activity is glutamate 260. Residues 264-268 and histidine 271 each bind 7-phospho-2-dehydro-3-deoxy-D-arabino-heptonate; that span reads RNLLN. Position 271 (histidine 271) interacts with Zn(2+). The active-site Proton acceptor; for 3-dehydroquinate synthase activity is histidine 275. 7-phospho-2-dehydro-3-deoxy-D-arabino-heptonate-binding residues include histidine 287 and lysine 356. Residue histidine 287 coordinates Zn(2+). The segment at 397 to 843 is EPSP synthase; the sequence is VDEFTKSSWD…WDVLHQSFGV (447 aa). Cysteine 825 functions as the For EPSP synthase activity in the catalytic mechanism. The shikimate kinase stretch occupies residues 863-1058; that stretch reads NASIILIGMR…KTKKRSTFLT (196 aa). 870–877 is a binding site for ATP; sequence GMRGAGKT. Residues 1059 to 1280 form a 3-dehydroquinase region; that stretch reads LNYPRIEDAL…AAPGQLTVKQ (222 aa). Histidine 1182 (proton acceptor; for 3-dehydroquinate dehydratase activity) is an active-site residue. Lysine 1211 acts as the Schiff-base intermediate with substrate; for 3-dehydroquinate dehydratase activity in catalysis. The segment at 1293 to 1573 is shikimate dehydrogenase; the sequence is PEKFFLFGKP…FDAVYQKVIE (281 aa).

It in the N-terminal section; belongs to the sugar phosphate cyclases superfamily. Dehydroquinate synthase family. This sequence in the 2nd section; belongs to the EPSP synthase family. The protein in the 3rd section; belongs to the shikimate kinase family. In the 4th section; belongs to the type-I 3-dehydroquinase family. It in the C-terminal section; belongs to the shikimate dehydrogenase family. In terms of assembly, homodimer. It depends on Zn(2+) as a cofactor.

It is found in the cytoplasm. The enzyme catalyses 7-phospho-2-dehydro-3-deoxy-D-arabino-heptonate = 3-dehydroquinate + phosphate. It carries out the reaction 3-dehydroquinate = 3-dehydroshikimate + H2O. It catalyses the reaction shikimate + NADP(+) = 3-dehydroshikimate + NADPH + H(+). The catalysed reaction is shikimate + ATP = 3-phosphoshikimate + ADP + H(+). The enzyme catalyses 3-phosphoshikimate + phosphoenolpyruvate = 5-O-(1-carboxyvinyl)-3-phosphoshikimate + phosphate. It participates in metabolic intermediate biosynthesis; chorismate biosynthesis; chorismate from D-erythrose 4-phosphate and phosphoenolpyruvate: step 2/7. The protein operates within metabolic intermediate biosynthesis; chorismate biosynthesis; chorismate from D-erythrose 4-phosphate and phosphoenolpyruvate: step 3/7. Its pathway is metabolic intermediate biosynthesis; chorismate biosynthesis; chorismate from D-erythrose 4-phosphate and phosphoenolpyruvate: step 4/7. It functions in the pathway metabolic intermediate biosynthesis; chorismate biosynthesis; chorismate from D-erythrose 4-phosphate and phosphoenolpyruvate: step 5/7. It participates in metabolic intermediate biosynthesis; chorismate biosynthesis; chorismate from D-erythrose 4-phosphate and phosphoenolpyruvate: step 6/7. In terms of biological role, the AROM polypeptide catalyzes 5 consecutive enzymatic reactions in prechorismate polyaromatic amino acid biosynthesis. The sequence is that of Pentafunctional AROM polypeptide from Schizosaccharomyces pombe (strain 972 / ATCC 24843) (Fission yeast).